The primary structure comprises 66 residues: Large ribosomal subunit protein uL29 (66 aa).

This sequence belongs to the universal ribosomal protein uL29 family.

The polypeptide is Large ribosomal subunit protein uL29 (Rhizobium etli (strain CIAT 652)).